The sequence spans 113 residues: Urotensin-2B (113 aa).

The first 27 residues, methionine 1–glycine 27, serve as a signal peptide directing secretion. The propeptide occupies arginine 28–lysine 103. Cysteine 107 and cysteine 112 are joined by a disulfide.

It belongs to the urotensin-2 family.

The protein localises to the secreted. Potent vasoconstrictor. The chain is Urotensin-2B (Uts2b) from Mus musculus (Mouse).